The following is a 101-amino-acid chain: CRISPR-associated endoribonuclease Cas2 (101 aa).

Asp8 serves as a coordination point for Mg(2+).

The protein belongs to the CRISPR-associated endoribonuclease Cas2 protein family. As to quaternary structure, homodimer, forms a heterotetramer with a Cas1 homodimer. The cofactor is Mg(2+).

CRISPR (clustered regularly interspaced short palindromic repeat), is an adaptive immune system that provides protection against mobile genetic elements (viruses, transposable elements and conjugative plasmids). CRISPR clusters contain sequences complementary to antecedent mobile elements and target invading nucleic acids. CRISPR clusters are transcribed and processed into CRISPR RNA (crRNA). Functions as a ssRNA-specific endoribonuclease. Involved in the integration of spacer DNA into the CRISPR cassette. The chain is CRISPR-associated endoribonuclease Cas2 from Parvibaculum lavamentivorans (strain DS-1 / DSM 13023 / NCIMB 13966).